We begin with the raw amino-acid sequence, 228 residues long: Demethylmenaquinone methyltransferase (228 aa).

S-adenosyl-L-methionine contacts are provided by residues Thr-62, Asp-80, 100–101 (DA), and Ser-117.

It belongs to the class I-like SAM-binding methyltransferase superfamily. MenG/UbiE family.

The catalysed reaction is a 2-demethylmenaquinol + S-adenosyl-L-methionine = a menaquinol + S-adenosyl-L-homocysteine + H(+). It participates in quinol/quinone metabolism; menaquinone biosynthesis; menaquinol from 1,4-dihydroxy-2-naphthoate: step 2/2. Methyltransferase required for the conversion of demethylmenaquinol (DMKH2) to menaquinol (MKH2). This chain is Demethylmenaquinone methyltransferase, found in Mycolicibacterium gilvum (strain PYR-GCK) (Mycobacterium gilvum (strain PYR-GCK)).